The primary structure comprises 638 residues: Chaperone protein DnaK (638 aa).

Threonine 200 is subject to Phosphothreonine; by autocatalysis. The disordered stretch occupies residues 598-621; it reads SLHMAATAEQQSGSTGAGAGASAK.

The protein belongs to the heat shock protein 70 family.

In terms of biological role, acts as a chaperone. This chain is Chaperone protein DnaK, found in Xylella fastidiosa (strain M23).